We begin with the raw amino-acid sequence, 325 residues long: Malate dehydrogenase (325 aa).

Position 9–15 (9–15 (GAAGAIG)) interacts with NAD(+). 2 residues coordinate substrate: Arg-90 and Arg-96. NAD(+) is bound by residues Asn-103, Gln-110, and 127–129 (VGN). Residues Asn-129 and Arg-160 each contribute to the substrate site. His-185 acts as the Proton acceptor in catalysis.

Belongs to the LDH/MDH superfamily. MDH type 2 family.

It catalyses the reaction (S)-malate + NAD(+) = oxaloacetate + NADH + H(+). In terms of biological role, catalyzes the reversible oxidation of malate to oxaloacetate. The sequence is that of Malate dehydrogenase from Rubrobacter xylanophilus (strain DSM 9941 / JCM 11954 / NBRC 16129 / PRD-1).